Reading from the N-terminus, the 253-residue chain is MLKIRVIPCLDVADGRVVKGVNFVDLVDAGDPVESAKAYDAAGADELCFLDIHATNENRGTMYDLATRTAEQCFMPLTIGGGVRTTEDVRNLLLAGADKVSFNSAAVADPDVIARAADKFGSQCIVCAIDAKTVAPGRWEIFTHGGRKPTGIDAVEFAKTVVEKGAGEILLTSMDRDGTKQGFNIALTRAISDAVSVPVIASGGVGTLDHLVEGVTEGGASAVLAASIFHFGEFTIREAKEHMAEAGIPVRLS.

Residues D11 and D130 contribute to the active site.

The protein belongs to the HisA/HisF family. Heterodimer of HisH and HisF.

It is found in the cytoplasm. The catalysed reaction is 5-[(5-phospho-1-deoxy-D-ribulos-1-ylimino)methylamino]-1-(5-phospho-beta-D-ribosyl)imidazole-4-carboxamide + L-glutamine = D-erythro-1-(imidazol-4-yl)glycerol 3-phosphate + 5-amino-1-(5-phospho-beta-D-ribosyl)imidazole-4-carboxamide + L-glutamate + H(+). The protein operates within amino-acid biosynthesis; L-histidine biosynthesis; L-histidine from 5-phospho-alpha-D-ribose 1-diphosphate: step 5/9. Its function is as follows. IGPS catalyzes the conversion of PRFAR and glutamine to IGP, AICAR and glutamate. The HisF subunit catalyzes the cyclization activity that produces IGP and AICAR from PRFAR using the ammonia provided by the HisH subunit. This Dinoroseobacter shibae (strain DSM 16493 / NCIMB 14021 / DFL 12) protein is Imidazole glycerol phosphate synthase subunit HisF.